The sequence spans 147 residues: Globin, major polymeric component P1 (147 aa).

The region spanning 2-146 (HLTADQVAAL…ISDACIAGLQ (145 aa)) is the Globin domain. Heme b is bound at residue His-96.

Belongs to the globin family. In terms of assembly, polymer.

This chain is Globin, major polymeric component P1, found in Glycera dibranchiata (Bloodworm).